The following is a 239-amino-acid chain: Aspartate/glutamate leucyltransferase (239 aa).

Belongs to the R-transferase family. Bpt subfamily.

It localises to the cytoplasm. The enzyme catalyses N-terminal L-glutamyl-[protein] + L-leucyl-tRNA(Leu) = N-terminal L-leucyl-L-glutamyl-[protein] + tRNA(Leu) + H(+). It carries out the reaction N-terminal L-aspartyl-[protein] + L-leucyl-tRNA(Leu) = N-terminal L-leucyl-L-aspartyl-[protein] + tRNA(Leu) + H(+). Functionally, functions in the N-end rule pathway of protein degradation where it conjugates Leu from its aminoacyl-tRNA to the N-termini of proteins containing an N-terminal aspartate or glutamate. The polypeptide is Aspartate/glutamate leucyltransferase (Alkalilimnicola ehrlichii (strain ATCC BAA-1101 / DSM 17681 / MLHE-1)).